The primary structure comprises 246 residues: 1-(5-phosphoribosyl)-5-[(5-phosphoribosylamino)methylideneamino] imidazole-4-carboxamide isomerase (246 aa).

Aspartate 8 serves as the catalytic Proton acceptor. The active-site Proton donor is aspartate 131.

Belongs to the HisA/HisF family.

It localises to the cytoplasm. It carries out the reaction 1-(5-phospho-beta-D-ribosyl)-5-[(5-phospho-beta-D-ribosylamino)methylideneamino]imidazole-4-carboxamide = 5-[(5-phospho-1-deoxy-D-ribulos-1-ylimino)methylamino]-1-(5-phospho-beta-D-ribosyl)imidazole-4-carboxamide. The protein operates within amino-acid biosynthesis; L-histidine biosynthesis; L-histidine from 5-phospho-alpha-D-ribose 1-diphosphate: step 4/9. This is 1-(5-phosphoribosyl)-5-[(5-phosphoribosylamino)methylideneamino] imidazole-4-carboxamide isomerase from Polaromonas naphthalenivorans (strain CJ2).